Reading from the N-terminus, the 306-residue chain is Plant-type L-asparaginase (306 aa).

The active-site Nucleophile is the T176. Residues 203–206 (RVGD) and 225–228 (TGLG) each bind substrate.

Belongs to the Ntn-hydrolase family. In terms of assembly, heterotetramer of two alpha and two beta chains arranged as a dimer of alpha/beta heterodimers. The uncleaved protein forms homodimers. In terms of processing, autocleaved. Generates the alpha and beta subunits. The N-terminal residue of the beta subunit is thought to be responsible for the nucleophile hydrolase activity. Predominantly produced in the uncleaved form when gene expression is induced at 37 degrees Celsius with 0.5 mM IPTG. When produced at 42 degrees Celsius without adding IPTG, approximately 90% of the protein is found in the cleaved form, while the remaining 10% is observed as uncleaved precursor. Undergoes complete auto-cleavage within 24 hours at 37 degrees Celsius.

It carries out the reaction L-asparagine + H2O = L-aspartate + NH4(+). Its activity is regulated as follows. Undergoes auto-cleavage in a temperature-dependent and glycine-independent manner. Metal ions and EDTA do not have any significant effect on enzyme activity, indicating that activity is metal-independent. Catalyzes the hydrolysis of L-asparagine into L-aspartate and ammonia. Also displays D-asparaginase activity, which is about 10% of the L-asparaginase activity. Does not exhibit glutaminase activity. In Thermococcus kodakarensis (strain ATCC BAA-918 / JCM 12380 / KOD1) (Pyrococcus kodakaraensis (strain KOD1)), this protein is Plant-type L-asparaginase.